We begin with the raw amino-acid sequence, 127 residues long: I-Kappa-B like protein J1 (127 aa).

2 ANK repeats span residues 43–76 and 81–111; these read HGNT…DLDE and DGDT…RFGS.

It belongs to the polydnaviridae I-Kappa-B-like protein family.

In terms of biological role, suppresses the host immune response through NF-kappa-B inactivation. Possesses ankyrin repeat domains required for NF-kappa-B binding but lacks the regulatory regions required for dissociation from NF-kappa-B and degradation. Therefore, prevents host NF-kappa-B release and subsequent activation. The chain is I-Kappa-B like protein J1 (J2) from Microplitis demolitor (Parasitoid wasp).